Here is a 464-residue protein sequence, read N- to C-terminus: MKNTAGILAIAGMLIAPLAHADVILHAFNWKYSEVTAKADLIKGAGYKQVLISPPLKSSGNEWWARYQPQDLRLVDSPLGNKQDLEQLIAAMQARGIAVYADVVLNHMANESWKRNDLNYPGTELLGQYAANPDYYSRQRLFGDLGQNLLSASDFHPEGCITDWSDPGHVQYWRLCGGAGDKGLPDLDPNNWVVSQQQAYLKALKGMGIKGFRVDAVKHMSDYQINAVFTPEIKQGMHVFGEVITTGGAGSTDYERFLKPYLDNSGQGAYDFPLFASLRGALGYGGSMNQLADPGAYGQALPGNRAVTFAITHDIPTNDGFRYQILNQTDEKLAYAYLLGRDGGSPLVYSDHGETQDKDGLRWQDYYLRSDLKGMIRFHNAVQGQPMQLIGSGDCFVLFKRGKQGLVGVNKCDYEQEYWLDTAKFELNWYRNYKDVLDQSAVINVQSQWVRVAMPARRPPLAAE.

Positions 1–21 (MKNTAGILAIAGMLIAPLAHA) are cleaved as a signal peptide. Substrate-binding residues include H107 and R213. Catalysis depends on D215, which acts as the Nucleophile. 218 to 219 (KH) contacts substrate. E242 (proton donor) is an active-site residue. G247 and H313 together coordinate substrate.

The protein belongs to the glycosyl hydrolase 13 family.

The protein resides in the secreted. It carries out the reaction Endohydrolysis of (1-&gt;4)-alpha-D-glucosidic linkages in polysaccharides containing three or more (1-&gt;4)-alpha-linked D-glucose units.. In Aeromonas hydrophila, this protein is Alpha-amylase.